A 692-amino-acid polypeptide reads, in one-letter code: FMR1-interacting protein NUFIP2 (692 aa).

A disordered region spans residues 1–100 (MEEKPGQPQP…KKTGYGEING (100 aa)). Basic residues-rich tracts occupy residues 11–23 (QHHH…HHHP) and 31–54 (SHHH…HHQQ). K79 participates in a covalent cross-link: Glycyl lysine isopeptide (Lys-Gly) (interchain with G-Cter in SUMO2). T88 bears the Phosphothreonine mark. K110 is covalently cross-linked (Glycyl lysine isopeptide (Lys-Gly) (interchain with G-Cter in SUMO2)). Phosphoserine occurs at positions 113 and 114. Glycyl lysine isopeptide (Lys-Gly) (interchain with G-Cter in SUMO2) cross-links involve residues K137, K147, K158, and K172. Residues 205-233 (SKGADNDGSGSESGYTTPKKRKARRNSAK) form a disordered region. A phosphoserine mark is found at S213 and S215. Position 219 is a phosphotyrosine (Y219). 2 positions are modified to phosphothreonine: T220 and T221. A compositionally biased stretch (basic residues) spans 222-231 (PKKRKARRNS). Residues K262 and K281 each participate in a glycyl lysine isopeptide (Lys-Gly) (interchain with G-Cter in SUMO2) cross-link. Disordered regions lie at residues 277 to 337 (KPIW…WTLF) and 369 to 401 (TVQN…SQVP). Omega-N-methylarginine is present on R291. A Glycyl lysine isopeptide (Lys-Gly) (interchain with G-Cter in SUMO2) cross-link involves residue K293. Residue S304 is modified to Phosphoserine. K307 is covalently cross-linked (Glycyl lysine isopeptide (Lys-Gly) (interchain with G-Cter in SUMO2)). A compositionally biased stretch (low complexity) spans 371–395 (QNSSVSPSSSSSSSSTGETQTQSSS). S376 is subject to Phosphoserine. The residue at position 569 (T569) is a Phosphothreonine. 4 positions are modified to phosphoserine: S570, S589, S605, and S626. A Phosphothreonine modification is found at T630. A phosphoserine mark is found at S634, S649, S652, and S689.

As to quaternary structure, interacts with FMR1 (via N-terminus). Interacts with DDX6.

It localises to the nucleus. It is found in the cytoplasm. The protein resides in the stress granule. Its function is as follows. Binds RNA. This Mus musculus (Mouse) protein is FMR1-interacting protein NUFIP2 (Nufip2).